Consider the following 126-residue polypeptide: MHLSQLLACALLLALLSLRPSEAKPGAPPKVPRTPSGEEVAEPQAAGGGQKKGDKTPGGGGANLKDDRSRLLRDLRVDTKSRAAWTRLLHEHPNARKYKGGNKKGLSKGCFGLKLDRIGSMSGLGC.

Positions 1–23 (MHLSQLLACALLLALLSLRPSEA) are cleaved as a signal peptide. Positions 20–71 (PSEAKPGAPPKVPRTPSGEEVAEPQAAGGGQKKGDKTPGGGGANLKDDRSRL) are disordered. Positions 24–73 (KPGAPPKVPRTPSGEEVAEPQAAGGGQKKGDKTPGGGGANLKDDRSRLLR) are excised as a propeptide. Positions 46-62 (AGGGQKKGDKTPGGGGA) are enriched in gly residues. Cysteines 110 and 126 form a disulfide.

It belongs to the natriuretic peptide family. In terms of processing, degraded by IDE (in vitro).

It is found in the secreted. Its function is as follows. Hormone which plays a role in endochondral ossification through regulation of cartilaginous growth plate chondrocytes proliferation and differentiation. May also be vasoactive and natriuretic. Acts by specifically binding and stimulating NPR2 to produce cGMP. Binds the clearance receptor NPR3. This Bos taurus (Bovine) protein is C-type natriuretic peptide (NPPC).